Consider the following 132-residue polypeptide: Small ribosomal subunit protein uS8 (132 aa).

The protein belongs to the universal ribosomal protein uS8 family. Part of the 30S ribosomal subunit. Contacts proteins S5 and S12.

One of the primary rRNA binding proteins, it binds directly to 16S rRNA central domain where it helps coordinate assembly of the platform of the 30S subunit. The chain is Small ribosomal subunit protein uS8 from Anaplasma marginale (strain Florida).